Reading from the N-terminus, the 214-residue chain is Phosphoenolpyruvate guanylyltransferase (214 aa).

Phosphoenolpyruvate is bound by residues threonine 139, glycine 155, and serine 158.

The protein belongs to the CofC family.

It carries out the reaction phosphoenolpyruvate + GTP + H(+) = enolpyruvoyl-2-diphospho-5'-guanosine + diphosphate. It participates in cofactor biosynthesis; coenzyme F420 biosynthesis. Functionally, guanylyltransferase that catalyzes the activation of phosphoenolpyruvate (PEP) as enolpyruvoyl-2-diphospho-5'-guanosine, via the condensation of PEP with GTP. It is involved in the biosynthesis of coenzyme F420, a hydride carrier cofactor. This Salinispora arenicola (strain CNS-205) protein is Phosphoenolpyruvate guanylyltransferase.